A 164-amino-acid polypeptide reads, in one-letter code: Peptidyl-prolyl cis-trans isomerase A-like 4D (164 aa).

The PPIase cyclophilin-type domain maps to 7–163 (FFEITRDGKP…KKITIADCGQ (157 aa)).

Belongs to the cyclophilin-type PPIase family. PPIase A subfamily.

The protein localises to the cytoplasm. The enzyme catalyses [protein]-peptidylproline (omega=180) = [protein]-peptidylproline (omega=0). Its function is as follows. PPIases accelerate the folding of proteins. It catalyzes the cis-trans isomerization of proline imidic peptide bonds in oligopeptides. This is Peptidyl-prolyl cis-trans isomerase A-like 4D from Homo sapiens (Human).